Reading from the N-terminus, the 105-residue chain is Tyrosine-protein phosphatase 12 (105 aa).

The 105-residue stretch at 1–105 (WRMIWEKRVE…NLRRIVRTEF (105 aa)) folds into the Tyrosine-protein phosphatase domain. A substrate-binding site is contributed by Asp-84.

It belongs to the protein-tyrosine phosphatase family.

It carries out the reaction O-phospho-L-tyrosyl-[protein] + H2O = L-tyrosyl-[protein] + phosphate. This Styela plicata (Wrinkled sea squirt) protein is Tyrosine-protein phosphatase 12 (STY-12).